A 90-amino-acid polypeptide reads, in one-letter code: Probable Fe(2+)-trafficking protein (90 aa).

This sequence belongs to the Fe(2+)-trafficking protein family. As to quaternary structure, monomer.

Functionally, could be a mediator in iron transactions between iron acquisition and iron-requiring processes, such as synthesis and/or repair of Fe-S clusters in biosynthetic enzymes. This Pectobacterium carotovorum subsp. carotovorum (strain PC1) protein is Probable Fe(2+)-trafficking protein.